A 215-amino-acid polypeptide reads, in one-letter code: Large ribosomal subunit protein uL4 (215 aa).

A disordered region spans residues 46-72; it reads TAKSKNRAEVSGGGRKPWAQKGGGRAR. A compositionally biased stretch (gly residues) spans 56–71; it reads SGGGRKPWAQKGGGRA.

This sequence belongs to the universal ribosomal protein uL4 family. As to quaternary structure, part of the 50S ribosomal subunit.

In terms of biological role, one of the primary rRNA binding proteins, this protein initially binds near the 5'-end of the 23S rRNA. It is important during the early stages of 50S assembly. It makes multiple contacts with different domains of the 23S rRNA in the assembled 50S subunit and ribosome. Its function is as follows. Forms part of the polypeptide exit tunnel. This Helicobacter pylori (strain ATCC 700392 / 26695) (Campylobacter pylori) protein is Large ribosomal subunit protein uL4.